We begin with the raw amino-acid sequence, 855 residues long: Protein KRI1 homolog (855 aa).

Disordered stretches follow at residues 47–67, 82–117, 130–196, 312–342, 424–453, and 589–855; these read VSESEFDSDSSSSEEDEVDPK, KDPCIYDKGTKFFSESSGDEDDKDGEAPKKKKKAKP, EHNG…KTKE, SLRRTDDKRKEKRKELKERKDQEKQQKMKEL, YDPRQHANGGGEDYEGHCEDDDFNMDCDYD, and KSLY…KKDN. Residues 48–64 show a composition bias toward acidic residues; that stretch reads SESEFDSDSSSSEEDEV. The span at 82–91 shows a compositional bias: basic and acidic residues; the sequence is KDPCIYDKGT. Residues Ser95, Ser97, Ser98, Ser137, and Ser138 each carry the phosphoserine modification. Basic and acidic residues predominate over residues 160–176; that stretch reads EEERRLKAEFRKVMNKE. Ser179 carries the phosphoserine modification. A coiled-coil region spans residues 307 to 362; the sequence is RTIEQSLRRTDDKRKEKRKELKERKDQEKQQKMKELELVKEMKRKEIDEKIRKLKA. Acidic residues predominate over residues 441 to 452; sequence CEDDDFNMDCDY. Residues 609-619 are compositionally biased toward low complexity; that stretch reads VTPAEATAPAE. Residues 630 to 640 show a composition bias toward basic residues; that stretch reads KSKRKRLKRKA. Composition is skewed to basic and acidic residues over residues 650–664 and 674–692; these read VLKEESDSKDPKEAD and SSKKKVDTPSKKGKDDANQ. 3 stretches are compositionally biased toward polar residues: residues 720 to 748, 756 to 773, and 792 to 805; these read VQNGFQKPQNQANKSAKTKSNQPFKTTES, SNGNNPFNKPQSKSQQRQ, and ANGTNPFKKSNQKP. Low complexity predominate over residues 812–826; the sequence is KKTNNFKAKNKQNNN. Residues 842 to 855 show a composition bias toward basic residues; it reads RKFHKREKYGKKDN.

The protein belongs to the KRI1 family.

This is Protein KRI1 homolog from Drosophila melanogaster (Fruit fly).